The following is a 506-amino-acid chain: MKEYQVYLERDRSRQQDFLYPLIFREYVYGLAYSHDFNRSTFVENVGYDNKYSLLIVKRLITRMYQQNHLIISANDSKKNPFLGYNKNFYSQIISEGFAIIVEIPFFLQFSSSLEAAEIVKSYKNLRSIHSIFPFLEDKFPYLNYVSDIRIPYPIHLEILVQILRYWVKDAPFFHLLRLFLYNFCNRNSFLTPKKSISTFSKSNPRLFLFLYNFYVCEYESIFLFLRKKSSHLRLKSFSVFFERIFFYAKREHLVEVFAKDFSSTLTFFKDPLIHYVRYQGKSILASKNAPLLMNKWKHYFIHLWECFFDVWSQPGTIHIKQLSEHSFYLLGYFSNVRLNRSVVRSQMVQNTFLIEIVSKKLDIIVPIIPIIRSLAKAKFCNVLGHPISKAVWADSSDFDIIDRFLRICRNISHYYNGSSKKKSLYRIKYILRLSCIKTLACKHKSTVRAFLKRSGSEELLEEFFTEEEEILSLIFPRASSTLQKLHGNRIWYLDILFSNDLVNHE.

The protein belongs to the intron maturase 2 family. MatK subfamily.

Its subcellular location is the plastid. It localises to the chloroplast. Its function is as follows. Usually encoded in the trnK tRNA gene intron. Probably assists in splicing its own and other chloroplast group II introns. The chain is Maturase K from Mimosa pudica (Sensitive plant).